Here is a 463-residue protein sequence, read N- to C-terminus: L-seryl-tRNA(Sec) selenium transferase (463 aa).

An N6-(pyridoxal phosphate)lysine modification is found at Lys295.

It belongs to the SelA family. In terms of assembly, homodecamer; pentamer of dimers. Binds only one seryl-tRNA(Sec) per dimer. Requires pyridoxal 5'-phosphate as cofactor.

It is found in the cytoplasm. The catalysed reaction is L-seryl-tRNA(Sec) + selenophosphate + H(+) = L-selenocysteinyl-tRNA(Sec) + phosphate. Its pathway is aminoacyl-tRNA biosynthesis; selenocysteinyl-tRNA(Sec) biosynthesis; selenocysteinyl-tRNA(Sec) from L-seryl-tRNA(Sec) (bacterial route): step 1/1. Converts seryl-tRNA(Sec) to selenocysteinyl-tRNA(Sec) required for selenoprotein biosynthesis. This is L-seryl-tRNA(Sec) selenium transferase from Shigella sonnei (strain Ss046).